Reading from the N-terminus, the 677-residue chain is L-type lectin-domain containing receptor kinase IV.2 (677 aa).

The N-terminal stretch at 1-22 is a signal peptide; it reads MFVKLKLIFFFFLLCQIMISSS. The Extracellular segment spans residues 23 to 291; the sequence is QNLNFTYNGF…EPRRISEFYK (269 aa). The interval 24–262 is legume-lectin like; it reads NLNFTYNGFH…EHFLVGWSFR (239 aa). N-linked (GlcNAc...) asparagine glycans are attached at residues Asn26, Asn57, Asn81, Asn128, Asn134, Asn171, Asn186, and Asn203. A helical transmembrane segment spans residues 292–312; it reads IGMPLISLSLIFSIIFLAFYI. Residues 313 to 677 are Cytoplasmic-facing; the sequence is VRRKKKYEEE…IADSLLSGGR (365 aa). One can recognise a Protein kinase domain in the interval 347 to 625; that stretch reads FKEKDLLGSG…LQYLRGDMAL (279 aa). Residues 353–361 and Lys376 contribute to the ATP site; that span reads LGSGGFGRV. Residue Asp472 is the Proton acceptor of the active site.

The protein in the C-terminal section; belongs to the protein kinase superfamily. Ser/Thr protein kinase family. This sequence in the N-terminal section; belongs to the leguminous lectin family.

The protein localises to the cell membrane. The catalysed reaction is L-seryl-[protein] + ATP = O-phospho-L-seryl-[protein] + ADP + H(+). It catalyses the reaction L-threonyl-[protein] + ATP = O-phospho-L-threonyl-[protein] + ADP + H(+). Its function is as follows. Required during pollen development. Involved in resistance response to the pathogenic bacteria Pseudomonas syringae. The sequence is that of L-type lectin-domain containing receptor kinase IV.2 from Arabidopsis thaliana (Mouse-ear cress).